The following is a 572-amino-acid chain: uncharacterized protein (572 aa).

Residues 543-572 (AYKKSSNTNSTTNSMNPRRSTVSSEDWVLN) form a disordered region. Residues 547 to 563 (SSNTNSTTNSMNPRRST) are compositionally biased toward low complexity.

This is an uncharacterized protein from Acanthamoeba polyphaga (Amoeba).